A 316-amino-acid polypeptide reads, in one-letter code: Phosphoribosylaminoimidazole-succinocarboxamide synthase (316 aa).

Belongs to the SAICAR synthetase family.

The enzyme catalyses 5-amino-1-(5-phospho-D-ribosyl)imidazole-4-carboxylate + L-aspartate + ATP = (2S)-2-[5-amino-1-(5-phospho-beta-D-ribosyl)imidazole-4-carboxamido]succinate + ADP + phosphate + 2 H(+). It participates in purine metabolism; IMP biosynthesis via de novo pathway; 5-amino-1-(5-phospho-D-ribosyl)imidazole-4-carboxamide from 5-amino-1-(5-phospho-D-ribosyl)imidazole-4-carboxylate: step 1/2. This is Phosphoribosylaminoimidazole-succinocarboxamide synthase from Flavobacterium psychrophilum (strain ATCC 49511 / DSM 21280 / CIP 103535 / JIP02/86).